Consider the following 224-residue polypeptide: UPF0758 protein Noc_0236 (224 aa).

The MPN domain maps to 102–224 (VLTDPQTTQR…TLSFAERGLL (123 aa)). 3 residues coordinate Zn(2+): His-173, His-175, and Asp-186. Positions 173–186 (HNHPSGVAEPSRAD) match the JAMM motif motif.

Belongs to the UPF0758 family.

The protein is UPF0758 protein Noc_0236 of Nitrosococcus oceani (strain ATCC 19707 / BCRC 17464 / JCM 30415 / NCIMB 11848 / C-107).